A 1429-amino-acid chain; its full sequence is Autophagy-related protein 11 (1429 aa).

The segment at 71 to 99 (TQRSQPGASSPPLSELPLPRYNAHTPPNS) is disordered. Low complexity predominate over residues 80-89 (SPPLSELPLP). Coiled coils occupy residues 143 to 173 (VMLR…KEWS), 553 to 590 (DDLL…QTQA), 632 to 815 (LETL…LEDI), and 851 to 989 (EGDM…RLES). The segment at 1024 to 1061 (DGTMHIQRTPRSERSLATTANPNDSDPSSSLRRSSTLN) is disordered. Positions 1042–1061 (TANPNDSDPSSSLRRSSTLN) are enriched in low complexity. Residues 1105 to 1143 (ADAVYRRVKDVEHMARKLQREARAYREKAHSFQKEAHDK) are a coiled coil. Basic and acidic residues predominate over residues 1209-1229 (SKSLQHDQAGETRKDGARGET). 2 disordered regions span residues 1209-1241 (SKSL…DNPF) and 1336-1429 (SSRG…LIGP). Acidic residues predominate over residues 1230-1239 (ESLDDDENDN). 2 stretches are compositionally biased toward polar residues: residues 1345–1372 (ASET…QHMS) and 1383–1393 (QETPQQTNSIS).

This sequence belongs to the ATG11 family. In terms of assembly, homodimer.

The protein localises to the preautophagosomal structure membrane. Its subcellular location is the vacuole membrane. In terms of biological role, involved in cytoplasm to vacuole transport (Cvt), pexophagy, mitophagy and nucleophagy. Recruits mitochondria for their selective degradation via autophagy (mitophagy) during starvation. Works as scaffold proteins that recruit ATG proteins to the pre-autophagosome (PAS), the site of vesicle/autophagosome formation. Required for the Cvt vesicles completion. This Neurospora crassa (strain ATCC 24698 / 74-OR23-1A / CBS 708.71 / DSM 1257 / FGSC 987) protein is Autophagy-related protein 11 (apg-8).